We begin with the raw amino-acid sequence, 147 residues long: uncharacterized protein (147 aa).

2 consecutive 4Fe-4S ferredoxin-type domains span residues 80–109 (WYPKIDYNRCKNCEKCISFCPRGVYDAENG) and 110–141 (KVVVKYPYSCIVNCNACSIMCCENNAIIFPDE). Positions 89, 92, 95, 99, 119, 123, 126, and 130 each coordinate [4Fe-4S] cluster.

[4Fe-4S] cluster serves as cofactor.

This is an uncharacterized protein from Methanocaldococcus jannaschii (strain ATCC 43067 / DSM 2661 / JAL-1 / JCM 10045 / NBRC 100440) (Methanococcus jannaschii).